The following is a 341-amino-acid chain: Putative NADPH-dependent methylglyoxal reductase GRP2 (341 aa).

Positions 40 and 171 each coordinate NADP(+).

It belongs to the NAD(P)-dependent epimerase/dehydratase family. Dihydroflavonol-4-reductase subfamily.

It localises to the cytoplasm. The catalysed reaction is (S)-lactaldehyde + NADP(+) = methylglyoxal + NADPH + H(+). Its function is as follows. Catalyzes the irreversible reduction of the cytotoxic compound methylglyoxal (MG, 2-oxopropanal) to (S)-lactaldehyde. MG is synthesized via a bypath of glycolysis from dihydroxyacetone phosphate and is believed to play a role in cell cycle regulation and stress adaptation. The protein is Putative NADPH-dependent methylglyoxal reductase GRP2 (GRP2) of Candida albicans (strain SC5314 / ATCC MYA-2876) (Yeast).